The chain runs to 600 residues: MEQKNVRNFCIIAHVDHGKSTLADRLLEYTGAISEREKREQLLDTLDVERERGITVKMQAVRMFYKAKDGNTYKLHLIDTPGHVDFSYEVSRALAACEGALLLIDASQGIEAQTVANFWKAVEQDLVIIPVINKIDLPSADVDRVKKQIEEVLGLDPEEAILASAKEGIGIEEILEAIVNRIPPPKGDPQKPLKALIFDSYYDPYRGAVAFVRIFDGEVKPGDKIMLMSTGKEYEVTEVGAQTPKMTKFDKLSAGDVGYIAASIKDVRDIRIGDTITHAKNPTKEPVPGFQPAKPMVYAGIYPAEDTTYEELRDALEKYAINDAAIVYEPESSPALGMGFRVGFLGLLHMEIVQERLEREYGVKIITTAPNVIYRVKKKFTDEVIEVRNPMDFPDNAGLIEYVEEPFVLVTIITPKEYVGPIIQLCQEKRGIQKNMTYLDPNTVYLEYEMPLSEIIVDFHDKIKSISRGFASYDYEFIGYRPSDLIKLTVLINKKPVDALSFIVHADRAQKFARRVAEKLRETIPRQLFEVHIQVAKGGKVIASERIKPLRANVTAKCYGGDVTRKKKLLENQKEGKKRMKQFGKVQLPQEAFLSVLKVE.

The tr-type G domain maps to 4 to 186 (KNVRNFCIIA…AIVNRIPPPK (183 aa)). GTP-binding positions include 16–21 (DHGKST) and 133–136 (NKID).

This sequence belongs to the TRAFAC class translation factor GTPase superfamily. Classic translation factor GTPase family. LepA subfamily.

The protein resides in the cell inner membrane. The enzyme catalyses GTP + H2O = GDP + phosphate + H(+). In terms of biological role, required for accurate and efficient protein synthesis under certain stress conditions. May act as a fidelity factor of the translation reaction, by catalyzing a one-codon backward translocation of tRNAs on improperly translocated ribosomes. Back-translocation proceeds from a post-translocation (POST) complex to a pre-translocation (PRE) complex, thus giving elongation factor G a second chance to translocate the tRNAs correctly. Binds to ribosomes in a GTP-dependent manner. The chain is Elongation factor 4 from Aquifex aeolicus (strain VF5).